Consider the following 116-residue polypeptide: Non-specific lipid-transfer protein D, cotyledon-specific isoform (116 aa).

An N-terminal signal peptide occupies residues 1–24 (MKNIFFSVFFLLSFLLCLANVSEA). Cystine bridges form between C28–C76, C38–C53, C54–C98, and C74–C112.

It belongs to the plant LTP family.

In terms of biological role, plant non-specific lipid-transfer proteins transfer phospholipids as well as galactolipids across membranes. May play a role in wax or cutin deposition in the cell walls of expanding epidermal cells and certain secretory tissues. The sequence is that of Non-specific lipid-transfer protein D, cotyledon-specific isoform from Ricinus communis (Castor bean).